Here is a 186-residue protein sequence, read N- to C-terminus: ATP synthase subunit delta (186 aa).

The protein belongs to the ATPase delta chain family. In terms of assembly, F-type ATPases have 2 components, F(1) - the catalytic core - and F(0) - the membrane proton channel. F(1) has five subunits: alpha(3), beta(3), gamma(1), delta(1), epsilon(1). F(0) has three main subunits: a(1), b(2) and c(10-14). The alpha and beta chains form an alternating ring which encloses part of the gamma chain. F(1) is attached to F(0) by a central stalk formed by the gamma and epsilon chains, while a peripheral stalk is formed by the delta and b chains.

It is found in the cell inner membrane. Functionally, f(1)F(0) ATP synthase produces ATP from ADP in the presence of a proton or sodium gradient. F-type ATPases consist of two structural domains, F(1) containing the extramembraneous catalytic core and F(0) containing the membrane proton channel, linked together by a central stalk and a peripheral stalk. During catalysis, ATP synthesis in the catalytic domain of F(1) is coupled via a rotary mechanism of the central stalk subunits to proton translocation. In terms of biological role, this protein is part of the stalk that links CF(0) to CF(1). It either transmits conformational changes from CF(0) to CF(1) or is implicated in proton conduction. The sequence is that of ATP synthase subunit delta from Ruegeria pomeroyi (strain ATCC 700808 / DSM 15171 / DSS-3) (Silicibacter pomeroyi).